The following is a 311-amino-acid chain: MSTFSLKIIRVGITVLVVVLAVIAIFNVWAFYTESPWTRDAKFTADVVAIAPDVSGLLTEVPVKDNQLVQKGQILFVIDQPRYQQALAEAEADVAYYQTLAAEKQREFSRRHLLGIQALSQEEIDQASNVLQTVQHQLAKTIAVRNLARLDLERTTIRAPAEGWVTNLNVHAGEFINRGATAVALVKKDTFYILAYLEETKLEGVKPGYRAEITPLGSNRILHGTVDSISAGVTNSSSSADSKGLATIDNNLEWVRLAQRVPVKIHLDSEDQQYLYPAGTTATVVITGPNDRDPHQASPMTKLMHRLREFG.

Residues 11-31 (VGITVLVVVLAVIAIFNVWAF) form a helical membrane-spanning segment.

The protein belongs to the membrane fusion protein (MFP) (TC 8.A.1) family.

The protein localises to the cell inner membrane. Functionally, forms an efflux pump with AaeB. This Yersinia pseudotuberculosis serotype O:1b (strain IP 31758) protein is p-hydroxybenzoic acid efflux pump subunit AaeA.